Here is a 199-residue protein sequence, read N- to C-terminus: Peroxisomal membrane protein PEX17 (199 aa).

It localises to the peroxisome membrane. Functionally, component of the peroxisomal translocation machinery with PEX13 and PEX14. Interacts indirectly with the PTS1 receptor (PAS10/PEX5) and directly binds to PEX14. Required for import of both PTS1 and PTS2 proteins. This chain is Peroxisomal membrane protein PEX17 (PEX17), found in Saccharomyces cerevisiae (strain ATCC 204508 / S288c) (Baker's yeast).